Consider the following 651-residue polypeptide: E3 SUMO-protein ligase PIAS1 (651 aa).

An N-acetylalanine modification is found at Ala2. The tract at residues 2-200 (ADSAELKQMV…KCDFTVQVQL (199 aa)) is required for interaction with MSX1. The region spanning 11 to 45 (VMSLRVSELQVLLGYAGRNKHGRKHELLTKALHLL) is the SAP domain. Positions 19-23 (LQVLL) match the LXXLL motif motif. Residues Lys40 and Lys46 each participate in a glycyl lysine isopeptide (Lys-Gly) (interchain with G-Cter in SUMO2) cross-link. A Nuclear localization signal motif is present at residues 56 to 64 (KIKELYRRR). A PINIT domain is found at 124–288 (HLTSALHPVH…SMAVYLVKQL (165 aa)). Glycyl lysine isopeptide (Lys-Gly) (interchain with G-Cter in SUMO2) cross-links involve residues Lys137 and Lys238. Residues 320 to 405 (PDSEIATTSL…LKYCTDCDEI (86 aa)) form an SP-RING-type zinc finger. Zn(2+) is bound by residues Cys351, His353, Cys374, and Cys377. Positions 368–380 (KKPTWVCPVCDKK) match the Nuclear localization signal motif. Lys453 participates in a covalent cross-link: Glycyl lysine isopeptide (Lys-Gly) (interchain with G-Cter in SUMO2). Residues 462–473 (LTIDSSSDEEEE) form an SUMO1-binding region. The segment at 465–511 (DSSSDEEEEEPSAKRTCPSLSPTSPLNNKGILSLPHQASPVSRTPSL) is disordered. Phosphoserine occurs at positions 467, 468, 483, and 485. Residues 482–491 (PSLSPTSPLN) are compositionally biased toward polar residues. Thr487 carries the phosphothreonine modification. Position 488 is a phosphoserine (Ser488). A Glycyl lysine isopeptide (Lys-Gly) (interchain with G-Cter in SUMO2) cross-link involves residue Lys493. A phosphoserine mark is found at Ser503, Ser510, and Ser522. 2 tandem repeats follow at residues 520–523 (NTSL) and 557–560 (NTSL). Positions 520–615 (NTSLIQDYRH…GSSSGSNSSL (96 aa)) are 4 X 4 AA repeats of N-T-S-L. The stretch at 598 to 601 (STSL) is one 3; approximate repeat. A compositionally biased stretch (low complexity) spans 599-621 (TSLPTTNGSSSGSNSSLVSSNSL). The disordered stretch occupies residues 599–632 (TSLPTTNGSSSGSNSSLVSSNSLRESHSHTVTNR). One copy of the 4; approximate repeat lies at 612–615 (NSSL).

This sequence belongs to the PIAS family. As to quaternary structure, interacts with NCOA2 and AR. Interacts with NR2C1; the interaction promotes its sumoylation. Interacts with DDX21, CSRP2, AXIN1, JUN, UBE2I, SUMO1, SATB2, PLAG1, TP53 and STAT1 (dimer), following IFNA1-stimulation. Interacts with SP3 (preferentially when SUMO-modified). Interacts with KLF8; the interaction results in SUMO ligation and repression of KLF8 transcriptional activity and of its cell cycle progression into G(1) phase. Interacts with CHUK/IKKA; this interaction induces PIAS1 phosphorylation. Interacts with PTK2/FAK1; the interaction promotes its sumoylation. Interacts with DDX5. Interacts with PML. Interacts with MTA1. Interacts with SUMO1P1/SUMO5. Interacts with PRDM1/Blimp-1. Interacts (via N-terminus) with MSX1 (via C-terminus); the interaction is required for the localization of both proteins to the nuclear periphery and specific binding of MSX1 to the core enhancer region in target gene promoters. In terms of assembly, (Microbial infection) Interacts with ebolavirus VP35; this interaction mediates the sumoylation of IRF7 and contributes to the viral inhibition of IFN-type I production. Post-translationally, sumoylated. As to expression, expressed in numerous tissues with highest level in testis.

It is found in the nucleus. Its subcellular location is the nucleus speckle. The protein localises to the PML body. It localises to the cytoplasm. The protein resides in the cytoskeleton. The protein operates within protein modification; protein sumoylation. In terms of biological role, functions as an E3-type small ubiquitin-like modifier (SUMO) ligase, stabilizing the interaction between UBE2I and the substrate, and as a SUMO-tethering factor. Catalyzes sumoylation of various proteins, such as CEBPB, MRE11, MTA1, PTK2 and PML. Plays a crucial role as a transcriptional coregulation in various cellular pathways, including the STAT pathway, the p53 pathway and the steroid hormone signaling pathway. In vitro, binds A/T-rich DNA. The effects of this transcriptional coregulation, transactivation or silencing, may vary depending upon the biological context. Mediates sumoylation of MRE11, stabilizing MRE11 on chromatin during end resection. Sumoylates PML (at 'Lys-65' and 'Lys-160') and PML-RAR and promotes their ubiquitin-mediated degradation. PIAS1-mediated sumoylation of PML promotes its interaction with CSNK2A1/CK2 which in turn promotes PML phosphorylation and degradation. Enhances the sumoylation of MTA1 and may participate in its paralog-selective sumoylation. Plays a dynamic role in adipogenesis by promoting the SUMOylation and degradation of CEBPB. Mediates the nuclear mobility and localization of MSX1 to the nuclear periphery, whereby MSX1 is brought into the proximity of target myoblast differentiation factor genes. Also required for the binding of MSX1 to the core enhancer region in target gene promoter regions, independent of its sumoylation activity. Capable of binding to the core enhancer region TAAT box in the MYOD1 gene promoter. Its function is as follows. (Microbial infection) Restricts Epstein-Barr virus (EBV) lytic replication by acting as an inhibitor for transcription factors involved in lytic gene expression. The virus can use apoptotic caspases to antagonize PIAS1-mediated restriction and express its lytic genes. The chain is E3 SUMO-protein ligase PIAS1 (PIAS1) from Homo sapiens (Human).